Consider the following 634-residue polypeptide: Threonine--tRNA ligase (634 aa).

The region spanning 1-61 (MFEVKLKDGS…DSDCEVQFVK (61 aa)) is the TGS domain. The segment at 242–532 (DHRKIGKEMG…LIEHYAGKFP (291 aa)) is catalytic. 3 residues coordinate Zn(2+): C333, H384, and H509.

It belongs to the class-II aminoacyl-tRNA synthetase family. As to quaternary structure, homodimer. It depends on Zn(2+) as a cofactor.

It is found in the cytoplasm. It carries out the reaction tRNA(Thr) + L-threonine + ATP = L-threonyl-tRNA(Thr) + AMP + diphosphate + H(+). Functionally, catalyzes the attachment of threonine to tRNA(Thr) in a two-step reaction: L-threonine is first activated by ATP to form Thr-AMP and then transferred to the acceptor end of tRNA(Thr). Also edits incorrectly charged L-seryl-tRNA(Thr). The chain is Threonine--tRNA ligase from Finegoldia magna (strain ATCC 29328 / DSM 20472 / WAL 2508) (Peptostreptococcus magnus).